A 265-amino-acid polypeptide reads, in one-letter code: Cytochrome b-c1 complex subunit Rieske, mitochondrial (265 aa).

A mitochondrion-targeting transit peptide spans 1–53 (MLRVAGRRLSSSAARSSSTFFTRSSFTVTDDSSPARSPSPSLTSSFLDQIRGF). The Mitochondrial matrix segment spans residues 54–102 (SSNSVSPAHQLGLVSDLPATVAAIKNPSSKIVYDDSNHERYPPGDPSKR). The chain crosses the membrane as a helical span at residues 103-125 (AFAYFVLTGGRFVYASSVRLLIL). The Mitochondrial intermembrane segment spans residues 126–265 (KFVLSMSASK…FLEENKLLIG (140 aa)). The Rieske domain maps to 175–263 (IKLANSVDLG…YSFLEENKLL (89 aa)). [2Fe-2S] cluster-binding residues include cysteine 208, histidine 210, cysteine 227, and histidine 230. A disulfide bridge links cysteine 213 with cysteine 229.

Belongs to the Rieske iron-sulfur protein family. In terms of assembly, component of the ubiquinol-cytochrome c oxidoreductase (cytochrome b-c1 complex, complex III, CIII), a multisubunit enzyme composed of 3 respiratory subunits cytochrome b, cytochrome c1 and Rieske protein, 2 core protein subunits, and several low-molecular weight protein subunits. The complex exists as an obligatory dimer and forms supercomplexes (SCs) in the inner mitochondrial membrane with cytochrome c oxidase (complex IV, CIV). Requires [2Fe-2S] cluster as cofactor.

It is found in the mitochondrion inner membrane. It catalyses the reaction a quinol + 2 Fe(III)-[cytochrome c](out) = a quinone + 2 Fe(II)-[cytochrome c](out) + 2 H(+)(out). Functionally, component of the ubiquinol-cytochrome c oxidoreductase, a multisubunit transmembrane complex that is part of the mitochondrial electron transport chain which drives oxidative phosphorylation. The respiratory chain contains 3 multisubunit complexes succinate dehydrogenase (complex II, CII), ubiquinol-cytochrome c oxidoreductase (cytochrome b-c1 complex, complex III, CIII) and cytochrome c oxidase (complex IV, CIV), that cooperate to transfer electrons derived from NADH and succinate to molecular oxygen, creating an electrochemical gradient over the inner membrane that drives transmembrane transport and the ATP synthase. The cytochrome b-c1 complex catalyzes electron transfer from ubiquinol to cytochrome c, linking this redox reaction to translocation of protons across the mitochondrial inner membrane, with protons being carried across the membrane as hydrogens on the quinol. In the process called Q cycle, 2 protons are consumed from the matrix, 4 protons are released into the intermembrane space and 2 electrons are passed to cytochrome c. The Rieske protein is a catalytic core subunit containing a [2Fe-2S] iron-sulfur cluster. It cycles between 2 conformational states during catalysis to transfer electrons from the quinol bound in the Q(0) site in cytochrome b to cytochrome c1. The protein is Cytochrome b-c1 complex subunit Rieske, mitochondrial (FES1) of Solanum tuberosum (Potato).